A 366-amino-acid chain; its full sequence is Uroporphyrinogen decarboxylase (366 aa).

Substrate-binding positions include 28–32 (RQAGR), Asp-78, Tyr-160, Thr-215, and His-333.

It belongs to the uroporphyrinogen decarboxylase family. Homodimer.

It localises to the cytoplasm. It catalyses the reaction uroporphyrinogen III + 4 H(+) = coproporphyrinogen III + 4 CO2. Its pathway is porphyrin-containing compound metabolism; protoporphyrin-IX biosynthesis; coproporphyrinogen-III from 5-aminolevulinate: step 4/4. Its function is as follows. Catalyzes the decarboxylation of four acetate groups of uroporphyrinogen-III to yield coproporphyrinogen-III. The sequence is that of Uroporphyrinogen decarboxylase from Paraburkholderia xenovorans (strain LB400).